The primary structure comprises 282 residues: Pantothenate synthetase (282 aa).

30–37 (MGYLHEGH) contributes to the ATP binding site. Residue histidine 37 is the Proton donor of the active site. Residue glutamine 61 participates in (R)-pantoate binding. Glutamine 61 contributes to the beta-alanine binding site. 147–150 (GMKD) contributes to the ATP binding site. Glutamine 153 is a binding site for (R)-pantoate. ATP is bound by residues valine 176 and 184 to 187 (KSSR).

It belongs to the pantothenate synthetase family. As to quaternary structure, homodimer.

Its subcellular location is the cytoplasm. It carries out the reaction (R)-pantoate + beta-alanine + ATP = (R)-pantothenate + AMP + diphosphate + H(+). It functions in the pathway cofactor biosynthesis; (R)-pantothenate biosynthesis; (R)-pantothenate from (R)-pantoate and beta-alanine: step 1/1. Catalyzes the condensation of pantoate with beta-alanine in an ATP-dependent reaction via a pantoyl-adenylate intermediate. This chain is Pantothenate synthetase, found in Bacillus cereus (strain ATCC 14579 / DSM 31 / CCUG 7414 / JCM 2152 / NBRC 15305 / NCIMB 9373 / NCTC 2599 / NRRL B-3711).